The primary structure comprises 503 residues: Long-chain-fatty-acid--CoA ligase FadD13 (503 aa).

The protein belongs to the ATP-dependent AMP-binding enzyme family. As to quaternary structure, homodimer.

It localises to the cell membrane. It catalyses the reaction a long-chain fatty acid + ATP + CoA = a long-chain fatty acyl-CoA + AMP + diphosphate. It participates in lipid metabolism; fatty acid biosynthesis. Required for maintaining the appropriate mycolic acid composition and permeability of the envelope on its exposure to acidic pH. Catalyzes the activation of long-chain fatty acids as acyl-coenzyme A (acyl-CoA), which are then transferred to the multifunctional polyketide synthase (PKS) type III for further chain extension. In Mycobacterium tuberculosis (strain CDC 1551 / Oshkosh), this protein is Long-chain-fatty-acid--CoA ligase FadD13 (fadD13).